We begin with the raw amino-acid sequence, 396 residues long: S-adenosylmethionine synthase (396 aa).

H16 is an ATP binding site. D18 is a binding site for Mg(2+). E44 serves as a coordination point for K(+). Residues E57 and Q100 each coordinate L-methionine. The flexible loop stretch occupies residues 100-110 (QSPDINQGVDR). Residues 165 to 167 (DAK), D240, 246 to 247 (RK), A263, and K267 each bind ATP. D240 is an L-methionine binding site. An L-methionine-binding site is contributed by K271.

The protein belongs to the AdoMet synthase family. As to quaternary structure, homotetramer; dimer of dimers. Requires Mg(2+) as cofactor. It depends on K(+) as a cofactor.

It localises to the cytoplasm. It carries out the reaction L-methionine + ATP + H2O = S-adenosyl-L-methionine + phosphate + diphosphate. It functions in the pathway amino-acid biosynthesis; S-adenosyl-L-methionine biosynthesis; S-adenosyl-L-methionine from L-methionine: step 1/1. Functionally, catalyzes the formation of S-adenosylmethionine (AdoMet) from methionine and ATP. The overall synthetic reaction is composed of two sequential steps, AdoMet formation and the subsequent tripolyphosphate hydrolysis which occurs prior to release of AdoMet from the enzyme. The protein is S-adenosylmethionine synthase of Pseudomonas fluorescens (strain SBW25).